The chain runs to 334 residues: Leucine-rich repeat-containing protein 26 (334 aa).

An N-terminal signal peptide occupies residues 1 to 26; that stretch reads MRGPSWSRPRPLLLLLLLLSPWPVWA. At 27–261 the chain is on the extracellular side; the sequence is QVSATASPSG…HCAQPLALRD (235 aa). Positions 34-71 constitute an LRRNT domain; the sequence is PSGSLGAPDCPEVCTCVPGGLASCSALSLPAVPPGLSL. Disulfide bonds link Cys-43-Cys-49 and Cys-47-Cys-57. 5 LRR repeats span residues 72–93, 96–117, 120–141, 144–167, and 168–190; these read RLRA…AFAG, ALQR…AFWG, ALQL…TFAP, ALRN…GALP, and LLRS…LGRL. N-linked (GlcNAc...) asparagine glycosylation is present at Asn-147. Residues 201–255 enclose the LRRCT domain; it reads NPWGCGCALRPLCAWLRRHPLPASEAETVLCVWPGRLTLSPLTAFSDAAFSHCAQ. 2 disulfides stabilise this stretch: Cys-205–Cys-231 and Cys-207–Cys-253. A helical membrane pass occupies residues 262-282; sequence LAVVYTLGPASFLVSLASCLA. Residues 283 to 334 lie on the Cytoplasmic side of the membrane; the sequence is LGSGLTACRARRRRLRTAALRPPRPPDPNPDPDPHGCASPADPGSPAAAAQA. A disordered region spans residues 298 to 334; that stretch reads RTAALRPPRPPDPNPDPDPHGCASPADPGSPAAAAQA. A compositionally biased stretch (pro residues) spans 304-313; sequence PPRPPDPNPD. The span at 320-334 shows a compositional bias: low complexity; it reads ASPADPGSPAAAAQA.

Interacts with KCNMA1. As to expression, isoform 1 is expressed highly in normal prostate and salivary gland, very weakly in colon, pancreas, and intestine, and not at all in other tissues. Isoform 1 is expressed highly in many cancer cell lines and in breast cancer, pancreatic cancer and colon cancer. Isoform 2 is expressed in cancer cell lines.

It is found in the cell membrane. The protein resides in the cytoplasm. It localises to the cytoskeleton. Its function is as follows. Auxiliary protein of the large-conductance, voltage and calcium-activated potassium channel (BK alpha). Required for the conversion of BK alpha channels from a high-voltage to a low-voltage activated channel type in non-excitable cells. These are characterized by negative membrane voltages and constant low levels of calcium. The sequence is that of Leucine-rich repeat-containing protein 26 (LRRC26) from Homo sapiens (Human).